We begin with the raw amino-acid sequence, 348 residues long: Uroporphyrinogen decarboxylase (348 aa).

Substrate contacts are provided by residues Arg24–Arg28, Asp73, Tyr150, Ser205, and His324.

This sequence belongs to the uroporphyrinogen decarboxylase family. Homodimer.

It is found in the cytoplasm. It carries out the reaction uroporphyrinogen III + 4 H(+) = coproporphyrinogen III + 4 CO2. Its pathway is porphyrin-containing compound metabolism; protoporphyrin-IX biosynthesis; coproporphyrinogen-III from 5-aminolevulinate: step 4/4. Its function is as follows. Catalyzes the decarboxylation of four acetate groups of uroporphyrinogen-III to yield coproporphyrinogen-III. The polypeptide is Uroporphyrinogen decarboxylase (Roseiflexus sp. (strain RS-1)).